The chain runs to 222 residues: Matrix protein (222 aa).

Residues 46–49 (PTAP) carry the PTAP/PSAP motif motif.

As to quaternary structure, homomultimer. Interacts with viral nucleocapsid. Interacts with host TSG101.

It localises to the virion membrane. It is found in the host endomembrane system. The protein resides in the host nucleus membrane. Plays a major role in assembly and budding of virion, by recruiting cellular partners of the ESCRT complexes that play a key role in releasing the budding particle from the host membrane. Condensates the ribonucleocapsid core during virus assembly. The polypeptide is Matrix protein (M) (Drosophila melanogaster (Fruit fly)).